Reading from the N-terminus, the 142-residue chain is Galactose-binding lectin l-1 (142 aa).

The 132-residue stretch at 3-134 (FVEVKNLIMK…DATVKNISVN (132 aa)) folds into the Galectin domain. Position 68–74 (68–74 (WQEEQRD)) interacts with a beta-D-galactoside. A glycan (N-linked (GlcNAc...) asparagine) is linked at asparagine 130.

In terms of assembly, homodimer. The N-terminus is blocked. Skin; highest expression in that of individuals showing resistance to infectious disease.

It is found in the secreted. In terms of biological role, involved in host defense at the body surface. Causes agglutination of the Gram-positive bacterium S.difficile. Possesses calcium-independent hemagglutinating activity. This Anguilla japonica (Japanese eel) protein is Galactose-binding lectin l-1.